The chain runs to 129 residues: Large ribosomal subunit protein bL12 (129 aa).

Positions 94 to 113 (TEGLPKTVKEKTSKSDAEDT) are disordered.

It belongs to the bacterial ribosomal protein bL12 family. Homodimer. Part of the ribosomal stalk of the 50S ribosomal subunit. Forms a multimeric L10(L12)X complex, where L10 forms an elongated spine to which 2 to 4 L12 dimers bind in a sequential fashion. Binds GTP-bound translation factors.

Forms part of the ribosomal stalk which helps the ribosome interact with GTP-bound translation factors. Is thus essential for accurate translation. The protein is Large ribosomal subunit protein bL12 of Chlamydia pneumoniae (Chlamydophila pneumoniae).